Reading from the N-terminus, the 148-residue chain is SsrA-binding protein (148 aa).

The tract at residues 119 to 148 (AKGKKQHDKRQSMKEADWKREKQRLIKHTR) is disordered. Basic and acidic residues predominate over residues 127 to 142 (KRQSMKEADWKREKQR).

This sequence belongs to the SmpB family.

It is found in the cytoplasm. Its function is as follows. Required for rescue of stalled ribosomes mediated by trans-translation. Binds to transfer-messenger RNA (tmRNA), required for stable association of tmRNA with ribosomes. tmRNA and SmpB together mimic tRNA shape, replacing the anticodon stem-loop with SmpB. tmRNA is encoded by the ssrA gene; the 2 termini fold to resemble tRNA(Ala) and it encodes a 'tag peptide', a short internal open reading frame. During trans-translation Ala-aminoacylated tmRNA acts like a tRNA, entering the A-site of stalled ribosomes, displacing the stalled mRNA. The ribosome then switches to translate the ORF on the tmRNA; the nascent peptide is terminated with the 'tag peptide' encoded by the tmRNA and targeted for degradation. The ribosome is freed to recommence translation, which seems to be the essential function of trans-translation. This Neisseria gonorrhoeae (strain ATCC 700825 / FA 1090) protein is SsrA-binding protein.